The chain runs to 251 residues: 5-oxoprolinase subunit A (251 aa).

Belongs to the LamB/PxpA family. As to quaternary structure, forms a complex composed of PxpA, PxpB and PxpC.

The catalysed reaction is 5-oxo-L-proline + ATP + 2 H2O = L-glutamate + ADP + phosphate + H(+). Catalyzes the cleavage of 5-oxoproline to form L-glutamate coupled to the hydrolysis of ATP to ADP and inorganic phosphate. This is 5-oxoprolinase subunit A from Paracidovorax citrulli (strain AAC00-1) (Acidovorax citrulli).